The sequence spans 437 residues: Ribosomal protein uS12 methylthiotransferase RimO (437 aa).

The MTTase N-terminal domain maps to asparagine 9–lysine 128. Residues cysteine 18, cysteine 57, cysteine 91, cysteine 152, cysteine 156, and cysteine 159 each coordinate [4Fe-4S] cluster. The Radical SAM core domain maps to threonine 138 to aspartate 368. The TRAM domain maps to glutamine 371–alanine 437.

Belongs to the methylthiotransferase family. RimO subfamily. It depends on [4Fe-4S] cluster as a cofactor.

It is found in the cytoplasm. It catalyses the reaction L-aspartate(89)-[ribosomal protein uS12]-hydrogen + (sulfur carrier)-SH + AH2 + 2 S-adenosyl-L-methionine = 3-methylsulfanyl-L-aspartate(89)-[ribosomal protein uS12]-hydrogen + (sulfur carrier)-H + 5'-deoxyadenosine + L-methionine + A + S-adenosyl-L-homocysteine + 2 H(+). Functionally, catalyzes the methylthiolation of an aspartic acid residue of ribosomal protein uS12. The polypeptide is Ribosomal protein uS12 methylthiotransferase RimO (Flavobacterium johnsoniae (strain ATCC 17061 / DSM 2064 / JCM 8514 / BCRC 14874 / CCUG 350202 / NBRC 14942 / NCIMB 11054 / UW101) (Cytophaga johnsonae)).